The following is a 233-amino-acid chain: Bcl-2-like protein 1 (233 aa).

Positions 4-24 (SNRELVVDFLSYKLSQKGYSW) match the BH4 motif. The tract at residues 27-73 (FSDVEENRTEAPEETEPERETPSAINGNPSWHLADSPAVNGATGHSS) is disordered. Residue Ser49 is modified to Phosphoserine; by PLK3. Residue Ser62 is modified to Phosphoserine; by CDK1. Positions 86-100 (VKQALREAGDEFELR) match the BH3 motif. Positions 129–148 (ELFRDGVNWGRIVAFFSFGG) match the BH1 motif. The BH2 motif lies at 180–195 (PWIQENGGWDTFVDLY). The helical transmembrane segment at 210 to 226 (FNRWFLTGMTVAGVVLL) threads the bilayer.

It belongs to the Bcl-2 family. In terms of assembly, homodimer. Interacts with BCL2L11. Interacts with BAD. Interacts with PGAM5. Interacts with HEBP2. Interacts with p53/TP53 and BBC3; interaction with BBC3 disrupts the interaction with p53/TP53. Interacts with ATP5F1A and ATP5F1B; the interactions mediate the association of isoform Bcl-X(L) with the mitochondrial membrane ATP synthase F(1)F(0) ATP synthase. Interacts with VDAC1. Interacts with BCL2L11 (via BH3). Interacts with RNF183. Interacts with GIMAP3/IAN4 and GIMAP5/IAN5. Interacts with GIMAP5 and HSPA8/HSC70; the interaction between HSPA8 and BCL2L1 is impaired in the absence of GIMAP5. Interacts with isoform 4 of CLU; this interaction releases and activates BAX and promotes cell death. As to quaternary structure, forms heterodimers with BAX, BAK or BCL2; heterodimerization with BAX does not seem to be required for anti-apoptotic activity. Interacts with isoform 1 of SIVA1; the interaction inhibits the anti-apoptotic activity. Interacts with IKZF3. Interacts with RTL10/BOP. Interacts with DNM1L and CLTA; DNM1L and BCL2L1 isoform BCL-X(L) may form a complex in synaptic vesicles that also contains clathrin and MFF. Interacts (via the loop between motifs BH4 and BH3) with NLRP1 (via LRR repeats), but not with NLRP2, NLRP3, NLRP4, PYCARD, nor MEFV. Interacts with BECN1. Post-translationally, proteolytically cleaved by caspases during apoptosis. The cleaved protein, lacking the BH4 motif, has pro-apoptotic activity. Phosphorylated on Ser-62 by CDK1. This phosphorylation is partial in normal mitotic cells, but complete in G2-arrested cells upon DNA-damage, thus promoting subsequent apoptosis probably by triggering caspases-mediated proteolysis. Phosphorylated by PLK3, leading to regulate the G2 checkpoint and progression to cytokinesis during mitosis. Phosphorylation at Ser-49 appears during the S phase and G2, disappears rapidly in early mitosis during prometaphase, metaphase and early anaphase, and re-appears during telophase and cytokinesis. In terms of processing, ubiquitinated by RNF183 during prolonged ER stress, leading to degradation by the proteosome. As to expression, expressed in most tissues. Bcl-X(beta) is specifically expressed in cerebellum, heart, and thymus. In the ovary, the predominant form is Bcl-X(L), with a small but detectable level of Bcl-X(S).

It is found in the mitochondrion inner membrane. It localises to the mitochondrion outer membrane. The protein resides in the mitochondrion matrix. Its subcellular location is the cytoplasmic vesicle. The protein localises to the secretory vesicle. It is found in the synaptic vesicle membrane. It localises to the cytoplasm. The protein resides in the cytosol. Its subcellular location is the cytoskeleton. The protein localises to the microtubule organizing center. It is found in the centrosome. It localises to the nucleus membrane. In terms of biological role, potent inhibitor of cell death. Inhibits activation of caspases. Appears to regulate cell death by blocking the voltage-dependent anion channel (VDAC) by binding to it and preventing the release of the caspase activator, CYC1, from the mitochondrial membrane. Also acts as a regulator of G2 checkpoint and progression to cytokinesis during mitosis. Isoform Bcl-X(L) also regulates presynaptic plasticity, including neurotransmitter release and recovery, number of axonal mitochondria as well as size and number of synaptic vesicle clusters. During synaptic stimulation, increases ATP availability from mitochondria through regulation of mitochondrial membrane ATP synthase F(1)F(0) activity and regulates endocytic vesicle retrieval in hippocampal neurons through association with DMN1L and stimulation of its GTPase activity in synaptic vesicles. May attenuate inflammation impairing NLRP1-inflammasome activation, hence CASP1 activation and IL1B release. Its function is as follows. Isoform Bcl-X(S) promotes apoptosis. This Rattus norvegicus (Rat) protein is Bcl-2-like protein 1 (Bcl2l1).